We begin with the raw amino-acid sequence, 598 residues long: Proline--tRNA ligase (598 aa).

The protein belongs to the class-II aminoacyl-tRNA synthetase family. ProS type 1 subfamily. As to quaternary structure, homodimer.

Its subcellular location is the cytoplasm. The catalysed reaction is tRNA(Pro) + L-proline + ATP = L-prolyl-tRNA(Pro) + AMP + diphosphate. Its function is as follows. Catalyzes the attachment of proline to tRNA(Pro) in a two-step reaction: proline is first activated by ATP to form Pro-AMP and then transferred to the acceptor end of tRNA(Pro). As ProRS can inadvertently accommodate and process non-cognate amino acids such as alanine and cysteine, to avoid such errors it has two additional distinct editing activities against alanine. One activity is designated as 'pretransfer' editing and involves the tRNA(Pro)-independent hydrolysis of activated Ala-AMP. The other activity is designated 'posttransfer' editing and involves deacylation of mischarged Ala-tRNA(Pro). The misacylated Cys-tRNA(Pro) is not edited by ProRS. This chain is Proline--tRNA ligase, found in Rippkaea orientalis (strain PCC 8801 / RF-1) (Cyanothece sp. (strain PCC 8801)).